Here is a 181-residue protein sequence, read N- to C-terminus: Peptidyl-tRNA hydrolase (181 aa).

Y14 contributes to the tRNA binding site. H19 (proton acceptor) is an active-site residue. TRNA contacts are provided by F60, N62, and N106.

The protein belongs to the PTH family. In terms of assembly, monomer.

It is found in the cytoplasm. It catalyses the reaction an N-acyl-L-alpha-aminoacyl-tRNA + H2O = an N-acyl-L-amino acid + a tRNA + H(+). Its function is as follows. Hydrolyzes ribosome-free peptidyl-tRNAs (with 1 or more amino acids incorporated), which drop off the ribosome during protein synthesis, or as a result of ribosome stalling. Catalyzes the release of premature peptidyl moieties from peptidyl-tRNA molecules trapped in stalled 50S ribosomal subunits, and thus maintains levels of free tRNAs and 50S ribosomes. This is Peptidyl-tRNA hydrolase from Campylobacter curvus (strain 525.92).